The chain runs to 119 residues: Inner membrane protein YijD (119 aa).

The Cytoplasmic portion of the chain corresponds to 1–8 (MKQANQDR). The helical transmembrane segment at 9–28 (GTLLLALVAGLSINGTFAAL) threads the bilayer. The Periplasmic segment spans residues 29–31 (FSS). A helical membrane pass occupies residues 32–50 (IVPFSVFPIISLVLTVYCL). Residues 51–61 (HQRYLNRTMPV) lie on the Cytoplasmic side of the membrane. Residues 62–84 (GLPGLAAACFILGVLLYSTVVRA) traverse the membrane as a helical segment. Over 85-88 (EYPD) the chain is Periplasmic. The helical transmembrane segment at 89–108 (IGSNFFPAVLSVIMVFWIGA) threads the bilayer. Over 109-119 (KMRNRKQEVAE) the chain is Cytoplasmic.

It is found in the cell inner membrane. This Escherichia coli O6:H1 (strain CFT073 / ATCC 700928 / UPEC) protein is Inner membrane protein YijD (yijD).